The primary structure comprises 366 residues: Ribosomal RNA large subunit methyltransferase M (366 aa).

S-adenosyl-L-methionine contacts are provided by residues S188, 221-224, D240, D260, and D277; that span reads CPGG. The Proton acceptor role is filled by K306.

Belongs to the class I-like SAM-binding methyltransferase superfamily. RNA methyltransferase RlmE family. RlmM subfamily. Monomer.

It localises to the cytoplasm. The catalysed reaction is cytidine(2498) in 23S rRNA + S-adenosyl-L-methionine = 2'-O-methylcytidine(2498) in 23S rRNA + S-adenosyl-L-homocysteine + H(+). Its function is as follows. Catalyzes the 2'-O-methylation at nucleotide C2498 in 23S rRNA. In Klebsiella pneumoniae subsp. pneumoniae (strain ATCC 700721 / MGH 78578), this protein is Ribosomal RNA large subunit methyltransferase M.